The following is a 163-amino-acid chain: Large ribosomal subunit protein uL10 (163 aa).

The protein belongs to the universal ribosomal protein uL10 family. As to quaternary structure, part of the ribosomal stalk of the 50S ribosomal subunit. The N-terminus interacts with L11 and the large rRNA to form the base of the stalk. The C-terminus forms an elongated spine to which L12 dimers bind in a sequential fashion forming a multimeric L10(L12)X complex.

Functionally, forms part of the ribosomal stalk, playing a central role in the interaction of the ribosome with GTP-bound translation factors. The protein is Large ribosomal subunit protein uL10 of Haemophilus influenzae (strain PittEE).